A 734-amino-acid polypeptide reads, in one-letter code: Meiotic driver SPOK1 (734 aa).

A coiled-coil region spans residues 4–41 (KDRIAQLLRELEEAKARVEEAKAREAQERCEKERLQLE). Disordered regions lie at residues 180-222 (ELTQ…ICSN) and 414-499 (LSSA…MADP). The segment covering 416–429 (SAPSSQNTDISEYT) has biased composition (polar residues). A compositionally biased stretch (basic and acidic residues) spans 457–468 (NEHDEHDEDHSE).

It is found in the cytoplasm. Its subcellular location is the nucleus. Its function is as follows. Promotes unequal transmission of alleles from the parental zygote to progeny spores by acting as poison/antidote system, leading to poisoning of progeny that do not inherit the allele. May possess DNA nuclease activity that leads to spore killing, and a kinase activity that confers resistance to the nuclease activity. Can suppress meiotic drive by the P.anserina SPOK2, SPOK3 and SPOK4 proteins. This is Meiotic driver SPOK1 from Podospora comata.